Here is a 384-residue protein sequence, read N- to C-terminus: 8-amino-7-oxononanoate synthase (384 aa).

Residue R21 participates in substrate binding. A pyridoxal 5'-phosphate-binding site is contributed by 108–109 (GF). H133 provides a ligand contact to substrate. Residues S179, H207, and T233 each coordinate pyridoxal 5'-phosphate. The residue at position 236 (K236) is an N6-(pyridoxal phosphate)lysine. Substrate is bound at residue T352.

The protein belongs to the class-II pyridoxal-phosphate-dependent aminotransferase family. BioF subfamily. Homodimer. Requires pyridoxal 5'-phosphate as cofactor.

The enzyme catalyses 6-carboxyhexanoyl-[ACP] + L-alanine + H(+) = (8S)-8-amino-7-oxononanoate + holo-[ACP] + CO2. It functions in the pathway cofactor biosynthesis; biotin biosynthesis. In terms of biological role, catalyzes the decarboxylative condensation of pimeloyl-[acyl-carrier protein] and L-alanine to produce 8-amino-7-oxononanoate (AON), [acyl-carrier protein], and carbon dioxide. The chain is 8-amino-7-oxononanoate synthase from Escherichia coli O157:H7.